The chain runs to 1465 residues: Claspin (1465 aa).

Over residues M1 to A12 the composition is skewed to low complexity. Disordered regions lie at residues M1–V490, A544–M566, and A585–M636. S45, S49, S52, S64, S75, S109, and S114 each carry phosphoserine. Residues Q121 to Q133 show a composition bias toward basic and acidic residues. The span at K154–K163 shows a compositional bias: basic residues. A compositionally biased stretch (basic and acidic residues) spans E205–A216. The span at K217–Q228 shows a compositional bias: basic residues. Basic and acidic residues-rich tracts occupy residues K229–K246, K254–S263, E273–K286, and T296–V335. Residues K260–D281 are a coiled coil. Residues K336–Q346 show a composition bias toward basic residues. Phosphoserine occurs at positions 350 and 354. The span at Q358–S373 shows a compositional bias: basic and acidic residues. Over residues N375–M388 the composition is skewed to acidic residues. A phosphoserine mark is found at S381, S404, S406, S432, S434, S444, S456, S458, and S468. Over residues Q400 to K417 the composition is skewed to basic and acidic residues. Acidic residues predominate over residues S432–E441. Over residues S456 to G470 the composition is skewed to acidic residues. The stretch at L564 to E587 forms a coiled coil. A compositionally biased stretch (acidic residues) spans E594–P606. T693 is modified (phosphothreonine). Positions L839–E874 form a coiled coil. Over residues M845–M859 the composition is skewed to basic and acidic residues. The segment at M845–S977 is disordered. 3 stretches are compositionally biased toward acidic residues: residues A860–P875, A913–P942, and D960–D969. At S963 the chain carries Phosphoserine. At T973 the chain carries Phosphothreonine. S990 carries the post-translational modification Phosphoserine. The disordered stretch occupies residues C1058–T1154. Residues P1067–E1076 are compositionally biased toward low complexity. A phosphoserine mark is found at S1093 and S1094. Residues S1094–L1103 show a composition bias toward acidic residues. Positions R1109–K1123 are enriched in basic residues. Residues S1127–T1154 show a composition bias toward acidic residues. At S1287 the chain carries Phosphoserine.

The protein belongs to the claspin family. Phosphorylated in response to DNA damage by IR and HU treatment. Phosphorylation does not require mei-41 or tefu. As to expression, detected in the ovary but not in the testis (at protein level).

It is found in the nucleus. Functionally, required for checkpoint signaling in response to DNA replication stress; either resulting from normal embryogenesis or induced by the DNA synthesis inhibitor hydroxyurea (HU). It is not required for the G2 arrest resulting from DNA double strand breaks induced by ionizing irradiation (IR). Necessary for the timely phosphorylation of Cdk1 at the mid-blastula transition. May have a minor role in maintaining genomic stability in mitotic cells. This is Claspin from Drosophila melanogaster (Fruit fly).